The primary structure comprises 483 residues: MKHYVAVDIGASSGRLILGKLVNEKLQLEEIHRFKNGFTYRDGHERWEIDQLMQEIFIGLEKVKQLGISECVLGIDTWGVDYVLIGASGEKLADPISYRDKRTLNAVQNLTSEYPREYIYKKTGIQFMELNTLYQLYVEERDLLERAEKILLIPDYIGYVLTGVKVAETTNSSTTQMLNLREQLFDKDLLSHLNIDVEKFAPLTDAGTYLGKVKEEWLEEYDIPNCDVVTVATHDTASAVVGTPAEGENWAFLSSGTWSLIGMELSAPINNEAAFKENYTNEWGAYGTYRFLKNIMGLWIVQEIARMDDYKHSFAEMAEEASNYPYFKQIINVNDARFNNPENMVDEIKLYCQETGQTIPETIGELTNCVYGSLALYYALELEKMTEITGKKIEKLYIVGGGSNVAMLNQLTAKLAGIEVFAGPSEATAIGNLVVQMINQGEIESMRAGRKIIRNSFEIGEFSCGDVRFEEIKERFTKVLEFN.

11–15 (ASSGR) is a binding site for ATP. Substrate contacts are provided by residues G79 and 234 to 236 (HDT). The active-site Proton acceptor is the D235. Residue T257 participates in ATP binding. N294 provides a ligand contact to substrate. Q302 is an ATP binding site. A disulfide bridge connects residues C352 and C369. Residue G401 participates in ATP binding.

The protein belongs to the rhamnulokinase family. Requires Mg(2+) as cofactor.

The catalysed reaction is L-rhamnulose + ATP = L-rhamnulose 1-phosphate + ADP + H(+). The protein operates within carbohydrate degradation; L-rhamnose degradation; glycerone phosphate from L-rhamnose: step 2/3. Functionally, involved in the catabolism of L-rhamnose (6-deoxy-L-mannose). Catalyzes the transfer of the gamma-phosphate group from ATP to the 1-hydroxyl group of L-rhamnulose to yield L-rhamnulose 1-phosphate. The sequence is that of Rhamnulokinase from Listeria monocytogenes serotype 4b (strain CLIP80459).